We begin with the raw amino-acid sequence, 298 residues long: Glutamyl-Q tRNA(Asp) synthetase (298 aa).

L-glutamate is bound by residues 9 to 13 and Glu45; that span reads RFAPS. A 'HIGH' region motif is present at residues 12–22; that stretch reads PSPTGLLHAGS. The Zn(2+) site is built by Cys101, Cys103, Tyr121, and Cys125. Tyr179 and Arg197 together coordinate L-glutamate. The short motif at 235–239 is the 'KMSKS' region element; it reads KLSKQ. Lys238 is a binding site for ATP.

Belongs to the class-I aminoacyl-tRNA synthetase family. GluQ subfamily. It depends on Zn(2+) as a cofactor.

Catalyzes the tRNA-independent activation of glutamate in presence of ATP and the subsequent transfer of glutamate onto a tRNA(Asp). Glutamate is transferred on the 2-amino-5-(4,5-dihydroxy-2-cyclopenten-1-yl) moiety of the queuosine in the wobble position of the QUC anticodon. In Chromobacterium violaceum (strain ATCC 12472 / DSM 30191 / JCM 1249 / CCUG 213 / NBRC 12614 / NCIMB 9131 / NCTC 9757 / MK), this protein is Glutamyl-Q tRNA(Asp) synthetase.